The following is a 511-amino-acid chain: 2,3-bisphosphoglycerate-independent phosphoglycerate mutase (511 aa).

Residues aspartate 14 and serine 64 each coordinate Mn(2+). Serine 64 serves as the catalytic Phosphoserine intermediate. Substrate contacts are provided by residues histidine 125, 155–156 (RD), arginine 187, arginine 193, 259–262 (RADR), and lysine 333. Mn(2+)-binding residues include aspartate 400, histidine 404, aspartate 441, histidine 442, and histidine 460.

This sequence belongs to the BPG-independent phosphoglycerate mutase family. Monomer. It depends on Mn(2+) as a cofactor.

It carries out the reaction (2R)-2-phosphoglycerate = (2R)-3-phosphoglycerate. It functions in the pathway carbohydrate degradation; glycolysis; pyruvate from D-glyceraldehyde 3-phosphate: step 3/5. In terms of biological role, catalyzes the interconversion of 2-phosphoglycerate and 3-phosphoglycerate. The protein is 2,3-bisphosphoglycerate-independent phosphoglycerate mutase of Idiomarina loihiensis (strain ATCC BAA-735 / DSM 15497 / L2-TR).